A 180-amino-acid polypeptide reads, in one-letter code: MTARLQEFYKEKVVAELIKQFGYKSVMEVPRITKITLNMGLGEAVNDKKVIEHATGDLTKIAGQKPVVTKARKAIAGFKIRQGYPIGTMVTLRGQRMYEFLDRFITVSLPRVRDFRGVSGRAFDGRGNYNIGVKEQIIFPEIEYDKIDALRGLNISITTTAKSDEEAKALLAAFKFPFRN.

This sequence belongs to the universal ribosomal protein uL5 family. As to quaternary structure, part of the 50S ribosomal subunit; part of the 5S rRNA/L5/L18/L25 subcomplex. Contacts the 5S rRNA and the P site tRNA. Forms a bridge to the 30S subunit in the 70S ribosome.

Its function is as follows. This is one of the proteins that bind and probably mediate the attachment of the 5S RNA into the large ribosomal subunit, where it forms part of the central protuberance. In the 70S ribosome it contacts protein S13 of the 30S subunit (bridge B1b), connecting the 2 subunits; this bridge is implicated in subunit movement. Contacts the P site tRNA; the 5S rRNA and some of its associated proteins might help stabilize positioning of ribosome-bound tRNAs. The sequence is that of Large ribosomal subunit protein uL5 from Ralstonia nicotianae (strain ATCC BAA-1114 / GMI1000) (Ralstonia solanacearum).